Here is a 444-residue protein sequence, read N- to C-terminus: Glutamyl-tRNA reductase (444 aa).

Substrate contacts are provided by residues 49-52, Ser109, 114-116, and Gln120; these read TCNR and ETQ. Cys50 serves as the catalytic Nucleophile. Position 189–194 (189–194) interacts with NADP(+); it reads GAGKMS. The segment at 425-444 is disordered; sequence KPKKQPAPAGIKEPVLAKKG.

It belongs to the glutamyl-tRNA reductase family. As to quaternary structure, homodimer.

The enzyme catalyses (S)-4-amino-5-oxopentanoate + tRNA(Glu) + NADP(+) = L-glutamyl-tRNA(Glu) + NADPH + H(+). The protein operates within porphyrin-containing compound metabolism; protoporphyrin-IX biosynthesis; 5-aminolevulinate from L-glutamyl-tRNA(Glu): step 1/2. In terms of biological role, catalyzes the NADPH-dependent reduction of glutamyl-tRNA(Glu) to glutamate 1-semialdehyde (GSA). This chain is Glutamyl-tRNA reductase, found in Pelotomaculum thermopropionicum (strain DSM 13744 / JCM 10971 / SI).